Here is a 507-residue protein sequence, read N- to C-terminus: RNA-binding protein MEX3B (507 aa).

The tract at residues 1–22 (MPSSLFADMERNGSGGGGGETL) is disordered. KH domains are found at residues 59 to 120 (MTEC…RREI) and 155 to 216 (QTTI…REEI). Disordered regions lie at residues 256-279 (NQSS…LGSA) and 426-450 (SSSS…GMRR). Residues 426–446 (SSSSSSSSSSSSSSSSSSSSS) show a composition bias toward low complexity. The RING-type zinc-finger motif lies at 456-496 (CSICFESEVIAALVPCGHNLFCMECANRICEKNQPQCPVCH).

Its subcellular location is the cytoplasm. It localises to the nucleus. The protein resides in the cytoplasmic granule. The protein localises to the P-body. RNA-binding protein. May be involved in post-transcriptional regulatory mechanisms. The protein is RNA-binding protein MEX3B (mex3b) of Xenopus laevis (African clawed frog).